Here is a 158-residue protein sequence, read N- to C-terminus: Transcription antitermination protein NusB (158 aa).

The segment covering 1 to 13 has biased composition (polar residues); that stretch reads MSEAGDTSPQPGK. Residues 1 to 24 form a disordered region; it reads MSEAGDTSPQPGKTGQPKAGDRRR.

It belongs to the NusB family.

Functionally, involved in transcription antitermination. Required for transcription of ribosomal RNA (rRNA) genes. Binds specifically to the boxA antiterminator sequence of the ribosomal RNA (rrn) operons. The sequence is that of Transcription antitermination protein NusB from Marinobacter nauticus (strain ATCC 700491 / DSM 11845 / VT8) (Marinobacter aquaeolei).